Consider the following 117-residue polypeptide: Appetite-regulating hormone (117 aa).

Positions Met-1–Ala-23 are cleaved as a signal peptide. Ser-26 is lipidated: O-decanoyl serine; alternate. Ser-26 carries the O-hexanoyl serine; alternate lipid modification. The O-octanoyl serine; alternate moiety is linked to residue Ser-26. The tract at residues Ser-29–Ala-52 is disordered. Residues Glu-31 to Lys-43 show a composition bias toward basic and acidic residues. The propeptide at Ala-52 to Arg-75 is removed in mature form. Leu-98 is subject to Leucine amide. Positions Gly-99–Glu-117 are cleaved as a propeptide — removed in mature form.

This sequence belongs to the motilin family. Post-translationally, O-octanoylated by GOAT/MBOAT4. O-octanoylation or O-decanoylation is essential for ghrelin activity. The O-decanoylated forms Ghrelin-27-C10 and Ghrelin-28-C10 differ in the length of the carbon backbone of the carboxylic acid bound to Ser-26. A small fraction of ghrelin, ghrelin-27-C10:1, ghrelin-27-C10:2, ghrelin-28-C8:1, ghrelin-28-C10:1, and ghrelin-28-C10:2, may be modified with singly or doubly unsaturated carboxylic acids. In terms of processing, amidation of Leu-98 is essential for obestatin activity.

The protein resides in the secreted. Ghrelin is the ligand for growth hormone secretagogue receptor type 1 (GHSR). Induces the release of growth hormone from the pituitary. Has an appetite-stimulating effect, induces adiposity and stimulates gastric acid secretion. Involved in growth regulation. In terms of biological role, obestatin may be the ligand for GPR39. May have an appetite-reducing effect resulting in decreased food intake. May reduce gastric emptying activity and jejunal motility. The sequence is that of Appetite-regulating hormone (GHRL) from Felis catus (Cat).